A 291-amino-acid polypeptide reads, in one-letter code: 4-hydroxy-tetrahydrodipicolinate synthase (291 aa).

Position 45 (threonine 45) interacts with pyruvate. Catalysis depends on tyrosine 133, which acts as the Proton donor/acceptor. Lysine 161 (schiff-base intermediate with substrate) is an active-site residue. Isoleucine 203 provides a ligand contact to pyruvate.

The protein belongs to the DapA family. Homotetramer; dimer of dimers.

The protein localises to the cytoplasm. It catalyses the reaction L-aspartate 4-semialdehyde + pyruvate = (2S,4S)-4-hydroxy-2,3,4,5-tetrahydrodipicolinate + H2O + H(+). It functions in the pathway amino-acid biosynthesis; L-lysine biosynthesis via DAP pathway; (S)-tetrahydrodipicolinate from L-aspartate: step 3/4. Catalyzes the condensation of (S)-aspartate-beta-semialdehyde [(S)-ASA] and pyruvate to 4-hydroxy-tetrahydrodipicolinate (HTPA). This is 4-hydroxy-tetrahydrodipicolinate synthase from Neisseria meningitidis serogroup C / serotype 2a (strain ATCC 700532 / DSM 15464 / FAM18).